The following is a 111-amino-acid chain: Ig kappa chain V-III region PC 2880/PC 1229 (111 aa).

Residues 1–23 (DIVLTQSPASLAVSLGQRATISC) form a framework-1 region. C23 and C92 form a disulfide bridge. The tract at residues 24–38 (RASESVDNYGISFMN) is complementarity-determining-1. The interval 39–53 (WFQQKPGQPPKLLIY) is framework-2. The interval 54-60 (AASNQGS) is complementarity-determining-2. The tract at residues 61-92 (GVPARFSGSGSGTDFSLNIHPMEEDDTAMYFC) is framework-3. Residues 93-101 (QQSKEVPWT) are complementarity-determining-3. Positions 102–111 (FGGGTKLEIK) are framework-4.

This Mus musculus (Mouse) protein is Ig kappa chain V-III region PC 2880/PC 1229.